The following is a 138-amino-acid chain: Small ribosomal subunit protein uS11c (138 aa).

The interval 1-22 (MAKSIPKTGSRKNVRIGSRNQT) is disordered.

This sequence belongs to the universal ribosomal protein uS11 family. As to quaternary structure, part of the 30S ribosomal subunit.

It localises to the plastid. The protein resides in the chloroplast. The chain is Small ribosomal subunit protein uS11c from Phaseolus angularis (Azuki bean).